The chain runs to 533 residues: Zinc finger protein 692 (533 aa).

Disordered regions lie at residues 124-251 and 290-310; these read SLIP…PATL and TESLDSPGSQAQSAPNPTCDE. A compositionally biased stretch (basic and acidic residues) spans 149–178; sequence EARRKQEAEGLECEHRERTQETRLSRRVEP. The segment covering 190–208 has biased composition (acidic residues); that stretch reads QVVEEEEEEEEEEEEEELL. The residue at position 233 (Ser233) is a Phosphoserine. Residues 290–305 are compositionally biased toward polar residues; that stretch reads TESLDSPGSQAQSAPN. C2H2-type zinc fingers lie at residues 329–354, 360–384, 390–412, 418–440, and 449–472; these read MPCDFPGCGRIFSNRQYLNHHKKYQH, FCCPEPACGKSFNFKKHLKEHVKLH, YICEFCARSFRTSSNLVIHRRIH, LQCEICGFTCRQKASLNWHRRKH, and FPCEFCGKRFEKPDSVVAHCSKSH. Residue Ser471 is modified to Phosphoserine. The interval 478 to 533 is disordered; it reads VQESPGSLGSSPSISAPEPLQSPEGTSFSTSYDSNPAPSTSISSPGVPAPRNTEKS. Residues 481-492 are compositionally biased toward low complexity; it reads SPGSLGSSPSIS. A compositionally biased stretch (polar residues) spans 500-521; that stretch reads PEGTSFSTSYDSNPAPSTSISS.

It belongs to the krueppel C2H2-type zinc-finger protein family. In terms of processing, phosphorylation at Ser-471 results in loss of DNA-binding activity.

Its subcellular location is the nucleus. May act as an transcriptional repressor for PCK1 gene expression, in turns may participate in the hepatic gluconeogenesis regulation through the activated AMPK signaling pathway. This Rattus norvegicus (Rat) protein is Zinc finger protein 692.